Consider the following 873-residue polypeptide: Alanine--tRNA ligase (873 aa).

The Zn(2+) site is built by histidine 562, histidine 566, cysteine 664, and histidine 668.

Belongs to the class-II aminoacyl-tRNA synthetase family. Zn(2+) is required as a cofactor.

Its subcellular location is the cytoplasm. The enzyme catalyses tRNA(Ala) + L-alanine + ATP = L-alanyl-tRNA(Ala) + AMP + diphosphate. In terms of biological role, catalyzes the attachment of alanine to tRNA(Ala) in a two-step reaction: alanine is first activated by ATP to form Ala-AMP and then transferred to the acceptor end of tRNA(Ala). Also edits incorrectly charged Ser-tRNA(Ala) and Gly-tRNA(Ala) via its editing domain. This chain is Alanine--tRNA ligase, found in Shewanella amazonensis (strain ATCC BAA-1098 / SB2B).